A 174-amino-acid polypeptide reads, in one-letter code: uncharacterized protein (174 aa).

This is an uncharacterized protein from Acidianus convivator (ABV).